The chain runs to 198 residues: Segregation and condensation protein B (198 aa).

Residues proline 167–glutamate 198 are disordered. Residues proline 172–glutamate 181 are compositionally biased toward acidic residues.

This sequence belongs to the ScpB family. Homodimer. Homodimerization may be required to stabilize the binding of ScpA to the Smc head domains. Component of a cohesin-like complex composed of ScpA, ScpB and the Smc homodimer, in which ScpA and ScpB bind to the head domain of Smc. The presence of the three proteins is required for the association of the complex with DNA.

The protein resides in the cytoplasm. Participates in chromosomal partition during cell division. May act via the formation of a condensin-like complex containing Smc and ScpA that pull DNA away from mid-cell into both cell halves. This chain is Segregation and condensation protein B, found in Listeria welshimeri serovar 6b (strain ATCC 35897 / DSM 20650 / CCUG 15529 / CIP 8149 / NCTC 11857 / SLCC 5334 / V8).